The following is a 283-amino-acid chain: Type III pantothenate kinase (283 aa).

9–16 (DIGNTRLK) provides a ligand contact to ATP. Residues Y116 and 123-126 (GVDR) contribute to the substrate site. D125 acts as the Proton acceptor in catalysis. ATP is bound at residue T149. A substrate-binding site is contributed by T211.

It belongs to the type III pantothenate kinase family. In terms of assembly, homodimer. NH4(+) is required as a cofactor. It depends on K(+) as a cofactor.

Its subcellular location is the cytoplasm. It catalyses the reaction (R)-pantothenate + ATP = (R)-4'-phosphopantothenate + ADP + H(+). It participates in cofactor biosynthesis; coenzyme A biosynthesis; CoA from (R)-pantothenate: step 1/5. Catalyzes the phosphorylation of pantothenate (Pan), the first step in CoA biosynthesis. The sequence is that of Type III pantothenate kinase from Cupriavidus taiwanensis (strain DSM 17343 / BCRC 17206 / CCUG 44338 / CIP 107171 / LMG 19424 / R1) (Ralstonia taiwanensis (strain LMG 19424)).